A 175-amino-acid polypeptide reads, in one-letter code: uncharacterized protein (175 aa).

Topologically, residues 1–2 (ME) are extracellular. Residues 3–23 (SIILSIAIFIGVLLGTSVGAG) traverse the membrane as a helical segment. Topologically, residues 24–151 (SGSSISPDVD…TGISTTMNAR (128 aa)) are cytoplasmic. Residues 26-88 (SSISPDVDAG…DVGAGSGSSI (63 aa)) form a disordered region. The segment covering 59–78 (FSGSSTSPDVDAGSGSSTSP) has biased composition (polar residues). The helical transmembrane segment at 152–172 (VAVLITAAILSAPVTAIALLE) threads the bilayer. Topologically, residues 173-175 (ARR) are extracellular.

It localises to the membrane. This is an uncharacterized protein from Saccharomyces cerevisiae (strain ATCC 204508 / S288c) (Baker's yeast).